The sequence spans 149 residues: MKGGKSKGESKKAETKLAVNKKGAAATKGGKKPAKGKEPKDPNKPKRPPSAFFVFMADFREQYKKDHPNNKSVAAVGKACGEEWKSLSEEEKAPYVDRALKKKEEYEITLQAYNKKLEGKDDEEGSDKSKSEVNDEDEDEEDEEDEDDD.

2 stretches are compositionally biased toward basic and acidic residues: residues Met-1–Thr-15 and Lys-35–Lys-44. Disordered stretches follow at residues Met-1 to Phe-52 and Ala-112 to Asp-149. A DNA-binding region (HMG box) is located at residues Pro-45–Asn-114. Acidic residues predominate over residues Asn-134 to Asp-149.

The protein belongs to the HMGB family.

The protein localises to the nucleus. The protein is HMG1/2-like protein of Vicia faba (Broad bean).